We begin with the raw amino-acid sequence, 73 residues long: Translation initiation factor IF-1 3 (73 aa).

The 72-residue stretch at 1–72 (MAKEELVEFG…TKGRINYRHK (72 aa)) folds into the S1-like domain.

This sequence belongs to the IF-1 family. As to quaternary structure, component of the 30S ribosomal translation pre-initiation complex which assembles on the 30S ribosome in the order IF-2 and IF-3, IF-1 and N-formylmethionyl-tRNA(fMet); mRNA recruitment can occur at any time during PIC assembly.

The protein resides in the cytoplasm. One of the essential components for the initiation of protein synthesis. Stabilizes the binding of IF-2 and IF-3 on the 30S subunit to which N-formylmethionyl-tRNA(fMet) subsequently binds. Helps modulate mRNA selection, yielding the 30S pre-initiation complex (PIC). Upon addition of the 50S ribosomal subunit IF-1, IF-2 and IF-3 are released leaving the mature 70S translation initiation complex. This chain is Translation initiation factor IF-1 3, found in Cupriavidus pinatubonensis (strain JMP 134 / LMG 1197) (Cupriavidus necator (strain JMP 134)).